The primary structure comprises 70 residues: Conotoxin ba3a (70 aa).

The first 20 residues, 1–20 (MLKIGVMLSIILVLFPLATL), serve as a signal peptide directing secretion. The propeptide occupies 21-55 (QLVAERPAAERYAENKQDLNPDERRNYLVDLGVER).

Expressed by the venom duct.

It localises to the secreted. The sequence is that of Conotoxin ba3a from Conus bayani (Bayan's cone).